The sequence spans 86 residues: YcgL domain-containing protein XOO0428 (86 aa).

Positions 1-83 (MHAYVYKSQR…PKTRVLAGEC (83 aa)) constitute a YcgL domain.

The sequence is that of YcgL domain-containing protein XOO0428 from Xanthomonas oryzae pv. oryzae (strain MAFF 311018).